The following is a 188-amino-acid chain: MTVLTQTTKHIESLLGQMKQIHRETFMQVDQQAFRQGMSNLGAAVNVITTDGVAGKSGFTASAVCSVTDTPPTLLVCLNRSASVFETFKQNQVLCVNTLAAHQAHLSNIFGGKTPMVDRFAHGEWRTLATQAPVLTDALVSFDCEVVQSLSVGSHDVFFCQVKAIQHCQGQNALMYFNRNYCEPHCVA.

This sequence belongs to the non-flavoprotein flavin reductase family. RutF subfamily.

The catalysed reaction is FMNH2 + NAD(+) = FMN + NADH + 2 H(+). In terms of biological role, catalyzes the reduction of FMN to FMNH2 which is used to reduce pyrimidine by RutA via the Rut pathway. This chain is FMN reductase (NADH) RutF, found in Acinetobacter baylyi (strain ATCC 33305 / BD413 / ADP1).